We begin with the raw amino-acid sequence, 432 residues long: MQVSVETTQGLGRRVTITIAADSIETAVKSELVNVAKKVRIDGFRKGKVPMNIVAQRYGASVRQDVLGDLMSRNFIDAIIKEKINPAGAPTYVPGEYKLGEDFTYSVEFEVYPEVELQGLEAIEVEKPIVEVTDADVDGMLDTLRKQQATWKEKDGAVEAEDRVTIDFTGSVDGEEFEGGKASDFVLAMGQGRMIPGFEDGIKGHKAGEEFTIDVTFPEEYHAENLKGKAAKFAINLKKVEERELPELTAEFIKRFGVEDGSVEGLRAEVRKNMERELKSAIRNRVKSQAIEGLVKANDIDVPAALIDSEIDVLRRQAAQRFGGNEKQALELPRELFEEQAKRRVVVGLLLGEVIRTNELKADEERVKGLIEEMASAYEDPKEVIEFYSKNKELMDNMRNVALEEQAAEAVLAKAKVTEKETTFNELMNQQA.

In terms of domain architecture, PPIase FKBP-type spans 161–246 (EDRVTIDFTG…LKKVEERELP (86 aa)).

The protein belongs to the FKBP-type PPIase family. Tig subfamily. In terms of assembly, homodimer and monomer. In vivo most of the ribosomes are in complex with monomeric TF. Uncomplexed TF, however, is in a monomer-dimer equilibrium with approximately two thirds of TF existing in a dimeric state.

The protein resides in the cytoplasm. The enzyme catalyses [protein]-peptidylproline (omega=180) = [protein]-peptidylproline (omega=0). Its function is as follows. Involved in protein export. Acts as a chaperone by maintaining the newly synthesized protein in an open conformation. Functions as a peptidyl-prolyl cis-trans isomerase. In Shigella dysenteriae serotype 1 (strain Sd197), this protein is Trigger factor.